We begin with the raw amino-acid sequence, 416 residues long: Tyrosine--tRNA ligase (416 aa).

Tyr34 is a binding site for L-tyrosine. The 'HIGH' region motif lies at 39 to 48; it reads PTGDSLHIGH. 2 residues coordinate L-tyrosine: Tyr165 and Gln169. The 'KMSKS' region motif lies at 227–231; that stretch reads KFGKT. Residue Lys230 coordinates ATP. The 68-residue stretch at 349-416 folds into the S4 RNA-binding domain; the sequence is ENIIIWLTDN…KKHYYLARVK (68 aa).

Belongs to the class-I aminoacyl-tRNA synthetase family. TyrS type 1 subfamily. In terms of assembly, homodimer.

The protein resides in the cytoplasm. It catalyses the reaction tRNA(Tyr) + L-tyrosine + ATP = L-tyrosyl-tRNA(Tyr) + AMP + diphosphate + H(+). Catalyzes the attachment of tyrosine to tRNA(Tyr) in a two-step reaction: tyrosine is first activated by ATP to form Tyr-AMP and then transferred to the acceptor end of tRNA(Tyr). In Limosilactobacillus reuteri (strain DSM 20016) (Lactobacillus reuteri), this protein is Tyrosine--tRNA ligase.